Here is a 734-residue protein sequence, read N- to C-terminus: Photosystem I P700 chlorophyll a apoprotein A2 (734 aa).

8 consecutive transmembrane segments (helical) span residues 46–69 (IFAS…FHVA), 135–158 (LYTG…LHLQ), 175–199 (LNHH…HVAI), 273–291 (IAHH…GHMY), 330–353 (LHFQ…QHMY), 369–395 (AALY…IFFI), 417–439 (AIIS…LYVH), and 517–535 (FLVH…LILV). C559 and C568 together coordinate [4Fe-4S] cluster. 2 helical membrane passes run 575-596 (AFYL…YWHW) and 643-665 (LSVW…MFLI). Positions 654, 662, and 670 each coordinate chlorophyll a. W671 is a phylloquinone binding site. A helical membrane pass occupies residues 707-727 (LVGLAHFSVGYIFTYAAFLIA).

It belongs to the PsaA/PsaB family. The PsaA/B heterodimer binds the P700 chlorophyll special pair and subsequent electron acceptors. PSI consists of a core antenna complex that captures photons, and an electron transfer chain that converts photonic excitation into a charge separation. The eukaryotic PSI reaction center is composed of at least 11 subunits. It depends on P700 is a chlorophyll a/chlorophyll a' dimer, A0 is one or more chlorophyll a, A1 is one or both phylloquinones and FX is a shared 4Fe-4S iron-sulfur center. as a cofactor.

It is found in the plastid. The protein resides in the chloroplast thylakoid membrane. It carries out the reaction reduced [plastocyanin] + hnu + oxidized [2Fe-2S]-[ferredoxin] = oxidized [plastocyanin] + reduced [2Fe-2S]-[ferredoxin]. Functionally, psaA and PsaB bind P700, the primary electron donor of photosystem I (PSI), as well as the electron acceptors A0, A1 and FX. PSI is a plastocyanin-ferredoxin oxidoreductase, converting photonic excitation into a charge separation, which transfers an electron from the donor P700 chlorophyll pair to the spectroscopically characterized acceptors A0, A1, FX, FA and FB in turn. Oxidized P700 is reduced on the lumenal side of the thylakoid membrane by plastocyanin. The sequence is that of Photosystem I P700 chlorophyll a apoprotein A2 from Psilotum nudum (Whisk fern).